We begin with the raw amino-acid sequence, 113 residues long: U11-theraphotoxin-Hhn1a (113 aa).

The N-terminal stretch at 1-21 is a signal peptide; that stretch reads MNTVRVTFLPVFVLAVSLGQA. Residues 22–74 constitute a propeptide that is removed on maturation; it reads DKDENRMEMQEKTEQGKSYLDFAENLLLQKLEELEAKLLEEDSEESRNSRQKR. The tract at residues 61–83 is disordered; the sequence is EEDSEESRNSRQKRCIGEGVPCD. Disulfide bonds link Cys75/Cys90, Cys82/Cys95, and Cys89/Cys110.

Belongs to the neurotoxin 14 (magi-1) family. 01 (HNTX-16) subfamily. In terms of tissue distribution, expressed by the venom gland.

Its subcellular location is the secreted. This chain is U11-theraphotoxin-Hhn1a, found in Cyriopagopus hainanus (Chinese bird spider).